The primary structure comprises 837 residues: Outer membrane usher protein HifC (837 aa).

The N-terminal stretch at 1–26 (MKTKIFPLNKIAFACSLLLANPLAWA) is a signal peptide. Cysteine 813 and cysteine 833 are oxidised to a cystine.

This sequence belongs to the fimbrial export usher family.

The protein resides in the cell outer membrane. In terms of biological role, essential for piliation. This Haemophilus influenzae protein is Outer membrane usher protein HifC (hifC).